The chain runs to 41 residues: Large ribosomal subunit protein bL36 (41 aa).

The protein belongs to the bacterial ribosomal protein bL36 family.

In Hyphomonas neptunium (strain ATCC 15444), this protein is Large ribosomal subunit protein bL36.